Here is a 468-residue protein sequence, read N- to C-terminus: Putative chitinase 1 (468 aa).

The N-terminal stretch at 1–21 is a signal peptide; the sequence is MDFYSSLLPFLILIYLEFCSG. Residues 22-381 form the GH18 domain; it reads FNRVCYYNGW…MSIIHGLGEY (360 aa). The cysteines at positions 26 and 51 are disulfide-linked. Chitin contacts are provided by residues 73–74 and 100–103; these read VF and GGWD. Glu-143 functions as the Proton donor in the catalytic mechanism. Residues Tyr-144, 213-216, and Trp-353 each bind chitin; that span reads KMYD. Positions 386-440 form a coiled coil; that stretch reads SDTLEAEREMINKKIRKAAREISYYSDKGNSTMAKKMEDKLNQLKDHLSAVQAHQ.

Belongs to the glycosyl hydrolase 18 family. In terms of tissue distribution, prismatic layer of shell (at protein level). Expressed primarily in the mantle with highest level in the outer epithelium of the mantle edge and lower level in the mantle pallium.

The protein resides in the secreted. The enzyme catalyses Random endo-hydrolysis of N-acetyl-beta-D-glucosaminide (1-&gt;4)-beta-linkages in chitin and chitodextrins.. In Margaritifera margaritifera (Freshwater pearl mussel), this protein is Putative chitinase 1.